The following is a 447-amino-acid chain: uncharacterized protein (447 aa).

It localises to the mitochondrion. This is an uncharacterized protein from Dictyostelium discoideum (Social amoeba).